The chain runs to 485 residues: Glutamyl-tRNA(Gln) amidotransferase subunit A (485 aa).

Residues K78 and S153 each act as charge relay system in the active site. S177 acts as the Acyl-ester intermediate in catalysis.

The protein belongs to the amidase family. GatA subfamily. Heterotrimer of A, B and C subunits.

It carries out the reaction L-glutamyl-tRNA(Gln) + L-glutamine + ATP + H2O = L-glutaminyl-tRNA(Gln) + L-glutamate + ADP + phosphate + H(+). Functionally, allows the formation of correctly charged Gln-tRNA(Gln) through the transamidation of misacylated Glu-tRNA(Gln) in organisms which lack glutaminyl-tRNA synthetase. The reaction takes place in the presence of glutamine and ATP through an activated gamma-phospho-Glu-tRNA(Gln). This Geotalea daltonii (strain DSM 22248 / JCM 15807 / FRC-32) (Geobacter daltonii) protein is Glutamyl-tRNA(Gln) amidotransferase subunit A.